The primary structure comprises 236 residues: Sugar fermentation stimulation protein homolog (236 aa).

It belongs to the SfsA family.

In Proteus mirabilis (strain HI4320), this protein is Sugar fermentation stimulation protein homolog.